A 546-amino-acid polypeptide reads, in one-letter code: Phosphatidylinositol 4-phosphate 5-kinase type-1 alpha (546 aa).

Residues 65–433 (TSSALKGAIQ…RFQRFMCNTV (369 aa)) enclose the PIPK domain. Lys-87 is covalently cross-linked (Glycyl lysine isopeptide (Lys-Gly) (interchain with G-Cter in ubiquitin)). The disordered stretch occupies residues 441 to 522 (PSPTKKFRSG…PGPSFSPAVG (82 aa)). The span at 449–461 (SGPSFSRRSGPSG) shows a compositional bias: low complexity. The span at 462–471 (NSCTPSQPTA) shows a compositional bias: polar residues. Residues 473–493 (GEHKAQVTTKAEVEPDIHLGR) show a composition bias toward basic and acidic residues.

Interacts with RAC1. Interacts with TUT1. Forms a complex with CDH1/E-cadherin, CTNNB1/beta-catenin and CTNND1 at the plasma membrane upon calcium stimulation. Found in a ternary complex with IRS1 and DGKZ in the absence of insulin stimulation. Interacts with DGKZ. Interacts with PIP4K2C; the interaction inhibits PIP5K1A kinase activity.

The protein localises to the cell membrane. Its subcellular location is the cytoplasm. The protein resides in the nucleus. It is found in the nucleus speckle. It localises to the cell projection. The protein localises to the ruffle. Its subcellular location is the lamellipodium. It catalyses the reaction a 1,2-diacyl-sn-glycero-3-phospho-(1D-myo-inositol 4-phosphate) + ATP = a 1,2-diacyl-sn-glycero-3-phospho-(1D-myo-inositol-4,5-bisphosphate) + ADP + H(+). The enzyme catalyses 1-octadecanoyl-2-(5Z,8Z,11Z,14Z)-eicosatetraenoyl-sn-glycero-3-phospho-1D-myo-inositol 4-phosphate + ATP = 1-octadecanoyl-2-(5Z,8Z,11Z,14Z)-eicosatetraenoyl-sn-glycero-3-phospho-1D-myo-inositol 4,5-bisphosphate + ADP + H(+). The catalysed reaction is 1,2-dihexadecanoyl-sn-glycero-3-phospho-(1D-myo-inositol-4-phosphate) + ATP = 1,2-dihexadecanoyl-sn-glycero-3-phospho-(1D-myo-inositol-4,5-bisphosphate) + ADP + H(+). It carries out the reaction 1-octadecanoyl-2-(9Z)-octadecenoyl-sn-glycero-3-phospho-1D-myo-inositol 4-phosphate + ATP = 1-octadecanoyl-2-(9Z)-octadecenoyl-sn-glycero-3-phospho-1D-myo-inositol 4,5-bisphosphate + ADP + H(+). It catalyses the reaction 1-octadecanoyl-2-(9Z)-octadecenoyl-sn-glycero-3-phospho-1D-myo-inositol + ATP = 1-octadecanoyl-2-(9Z)-octadecenoyl-sn-glycero-3-phospho-1D-myo-inositol 5-phosphate + ADP + H(+). The enzyme catalyses 1-octadecanoyl-2-(9Z,12Z)-octadecadienoyl-sn-glycero-3-phospho-1D-myo-inositol + ATP = 1-octadecanoyl-2-(9Z,12Z)-octadecadienoyl-sn-glycero-3-phospho-1D-myo-inositol 5-phosphate + ADP + H(+). The catalysed reaction is 1-octadecanoyl-2-(5Z,8Z,11Z,14Z-eicosatetraenoyl)-sn-glycero-3-phospho-(1D-myo-inositol) + ATP = 1-octadecanoyl-2-(5Z,8Z,11Z,14Z)-eicosatetraenoyl-sn-glycero-3-phospho-1D-myo-inositol 5-phosphate + ADP + H(+). It carries out the reaction 1,2-di-(9Z,12Z)-octadecadienoyl-sn-glycero-3-phospho-1D-myo-inositol + ATP = 1,2-di(9Z,12Z)-octadecadienoyl-sn-glycero-3-phospho-1D-myo-inositol 5-phosphate + ADP + H(+). Catalyzes the phosphorylation of phosphatidylinositol 4-phosphate (PtdIns(4)P/PI4P) to form phosphatidylinositol 4,5-bisphosphate (PtdIns(4,5)P2/PIP2), a lipid second messenger that regulates several cellular processes such as signal transduction, vesicle trafficking, actin cytoskeleton dynamics, cell adhesion, and cell motility. PtdIns(4,5)P2 can directly act as a second messenger or can be utilized as a precursor to generate other second messengers: inositol 1,4,5-trisphosphate (IP3), diacylglycerol (DAG) or phosphatidylinositol-3,4,5-trisphosphate (PtdIns(3,4,5)P3/PIP3). PIP5K1A-mediated phosphorylation of PtdIns(4)P is the predominant pathway for PtdIns(4,5)P2 synthesis. Can also use phosphatidylinositol (PtdIns) as substrate in vitro. Together with PIP5K1C, is required for phagocytosis, both enzymes regulating different types of actin remodeling at sequential steps. Promotes particle ingestion by activating the WAS GTPase-binding protein that induces Arp2/3 dependent actin polymerization at the nascent phagocytic cup. Together with PIP5K1B, is required, after stimulation by G-protein coupled receptors, for the synthesis of IP3 that will induce stable platelet adhesion. Recruited to the plasma membrane by the E-cadherin/beta-catenin complex where it provides the substrate PtdIns(4,5)P2 for the production of PtdIns(3,4,5)P3, IP3 and DAG, that will mobilize internal calcium and drive keratinocyte differentiation. Positively regulates insulin-induced translocation of SLC2A4 to the cell membrane in adipocytes. Together with PIP5K1C has a role during embryogenesis. Independently of its catalytic activity, is required for membrane ruffling formation, actin organization and focal adhesion formation during directional cell migration by controlling integrin-induced translocation of the small GTPase RAC1 to the plasma membrane. Also functions in the nucleus where it acts as an activator of TUT1 adenylyltransferase activity in nuclear speckles, thereby regulating mRNA polyadenylation of a select set of mRNAs. The protein is Phosphatidylinositol 4-phosphate 5-kinase type-1 alpha of Rattus norvegicus (Rat).